The sequence spans 79 residues: Cytoinsectotoxin-3 (79 aa).

This sequence belongs to the cationic peptide 06 (cytoinsectotoxin) family. Expressed by the venom gland.

The protein localises to the secreted. Its function is as follows. Insecticidal and antimicrobial peptide. Has insecticidal activity against larvae of flesh fly S.carnaria. Has antibacterial activity against Gram-positive bacterium B.subtilis B-501 (MIC=0.63 uM) and Gram-negative bacterium E.coli DH5alpha (MIC=2.5 uM). This Lachesana tarabaevi (Spider) protein is Cytoinsectotoxin-3.